Reading from the N-terminus, the 189-residue chain is GTPase KRas (189 aa).

N-acetylmethionine; in GTPase KRas; alternate is present on Met-1. Thr-2 bears the N-acetylthreonine; in GTPase KRas, N-terminally processed mark. GTP contacts are provided by residues 10–18 (GAGGVGKSA), 29–35 (VDEYDPT), and 59–60 (AG). Positions 32 to 40 (YDPTIEDSY) match the Effector region motif. (Microbial infection) O-linked (Glc) threonine; by P.sordellii toxin TcsL glycosylation is present at Thr-35. The residue at position 104 (Lys-104) is an N6-acetyllysine. 116–119 (NKCD) contacts GTP. The tract at residues 166–185 (YRLKKISKEEKTPGCVKIKK) is hypervariable region. Residue Lys-170 forms a Glycyl lysine isopeptide (Lys-Gly) (interchain with G-Cter in ubiquitin) linkage. Cys-180 carries the S-palmitoyl cysteine lipid modification. Residues Lys-182, Lys-184, and Lys-185 are each lipidated (N6-palmitoyl lysine). At Cys-186 the chain carries Cysteine methyl ester. Cys-186 is lipidated: S-farnesyl cysteine. Residues 187 to 189 (IIM) constitute a propeptide, removed in mature form.

This sequence belongs to the small GTPase superfamily. Ras family. Interacts with PHLPP. Interacts (active GTP-bound form preferentially) with RGS14. Interacts (when farnesylated) with PDE6D; this promotes dissociation from the cell membrane. Interacts with SOS1. Interacts (when farnesylated) with GPR31. Interacts with RAP1GDS1. Interacts (active GTP-bound form) with both SHOC2 and PP1c (all isoforms) to form a tertiary complex; SHOC2 and PP1c preferably bind M-Ras/MRAS, but they also bind K-Ras/KRAS, N-Ras/NRAS and H-Ras/HRAS. Interacts (GTP-bound form) with MAPKAP1/SIN1; inhibiting K-Ras/KRAS activity. As to quaternary structure, interacts with GPR31; in a farnelysation-dependent manner. Acetylation at Lys-104 prevents interaction with guanine nucleotide exchange factors (GEFs). In terms of processing, palmitoylated at Lys-182, Lys-184 and Lys-185. Palmitoylation on lysine residues is promoted by palmitoylation at Cys-180. Lysine-depalmitoylation by SIRT2 promotes its localization to endomembranes in endocytic pathways. Post-translationally, ubiquitinated by the BCR(LZTR1) E3 ubiquitin ligase complex at Lys-170 in a non-degradative manner, leading to inhibit Ras signaling by decreasing Ras association with membranes. (Microbial infection) Glucosylated at Thr-35 by P.sordellii toxin TcsL.

It is found in the cell membrane. The protein localises to the endomembrane system. The protein resides in the cytoplasm. It localises to the cytosol. It catalyses the reaction GTP + H2O = GDP + phosphate + H(+). With respect to regulation, alternates between an inactive form bound to GDP and an active form bound to GTP. Activated by a guanine nucleotide-exchange factor (GEF) and inactivated by a GTPase-activating protein (GAP). Interaction with SOS1 promotes exchange of bound GDP to GTP. In terms of biological role, ras proteins bind GDP/GTP and possess intrinsic GTPase activity. Plays an important role in the regulation of cell proliferation. Plays a role in promoting oncogenic events by inducing transcriptional silencing of tumor suppressor genes (TSGs) in colorectal cancer (CRC) cells in a ZNF304-dependent manner. The chain is GTPase KRas (KRAS) from Homo sapiens (Human).